Consider the following 192-residue polypeptide: Peptidyl-tRNA hydrolase (192 aa).

Tyr17 provides a ligand contact to tRNA. His22 (proton acceptor) is an active-site residue. The tRNA site is built by Phe68, Asn70, and Asn116.

The protein belongs to the PTH family. Monomer.

The protein resides in the cytoplasm. The enzyme catalyses an N-acyl-L-alpha-aminoacyl-tRNA + H2O = an N-acyl-L-amino acid + a tRNA + H(+). In terms of biological role, hydrolyzes ribosome-free peptidyl-tRNAs (with 1 or more amino acids incorporated), which drop off the ribosome during protein synthesis, or as a result of ribosome stalling. Functionally, catalyzes the release of premature peptidyl moieties from peptidyl-tRNA molecules trapped in stalled 50S ribosomal subunits, and thus maintains levels of free tRNAs and 50S ribosomes. This is Peptidyl-tRNA hydrolase from Buchnera aphidicola subsp. Cinara cedri (strain Cc).